Consider the following 332-residue polypeptide: UPF0285 protein MK0078 (332 aa).

Belongs to the UPF0285 family.

This chain is UPF0285 protein MK0078, found in Methanopyrus kandleri (strain AV19 / DSM 6324 / JCM 9639 / NBRC 100938).